The following is a 706-amino-acid chain: Paxillin-like protein 1 (706 aa).

Disordered regions lie at residues 24–192 (ERAG…EQDL), 222–258 (VLDQ…LNFE), 279–341 (AKQE…TKVE), and 514–537 (IDNS…SSDA). Positions 35–64 (PFSSQRNASTGSLQASVKSPPITRQRNVSA) are enriched in polar residues. Phosphoserine occurs at positions 43 and 63. 2 stretches are compositionally biased toward low complexity: residues 73–86 (KSAY…AYSS) and 117–129 (SSRP…SISR). 2 stretches are compositionally biased toward basic and acidic residues: residues 130–150 (PSER…DRQA) and 222–236 (VLDQ…KEES). Residues 237 to 252 (SIEYESEGQQEDENDI) show a composition bias toward acidic residues. Residues 279 to 290 (AKQEEKNTEPKI) show a composition bias toward basic and acidic residues. Residues 296-308 (TRESNTPSLTMNA) show a composition bias toward polar residues. LIM zinc-binding domains follow at residues 556 to 612 (CRAC…CQKH) and 621 to 672 (CKVC…CGNH).

This is Paxillin-like protein 1 (PXL1) from Saccharomyces cerevisiae (strain ATCC 204508 / S288c) (Baker's yeast).